The primary structure comprises 419 residues: Synaptotagmin-1 (419 aa).

Residues 1–57 (MVSESHHEALAAPPVTTVATVLPSNATEPASPGEGKEDAFSKLKEKFMNELHKIPLP) lie on the Vesicular side of the membrane. N-linked (GlcNAc...) asparagine glycosylation occurs at Asn25. Residues 58 to 80 (PWALIAIAIVAVLLVLTCCFCIC) form a helical membrane-spanning segment. Residues Cys75, Cys76, Cys78, Cys80, and Cys83 are each lipidated (S-palmitoyl cysteine). The Cytoplasmic portion of the chain corresponds to 81-419 (KKCLFKKKNK…EVDAMLAVKK (339 aa)). A disordered region spans residues 108–139 (KDLGKTMKDQDDDAETGLTDGEEKEEPKEEEK). Residues 117-131 (QDDDAETGLTDGEEK) are compositionally biased toward acidic residues. Phosphothreonine is present on Thr126. The interval 133–379 (EPKEEEKLGK…AIGKVFVGYN (247 aa)) is phospholipid binding. One can recognise a C2 1 domain in the interval 139–258 (KLGKLQYSLD…DFGHVTEEWR (120 aa)). Ca(2+)-binding residues include Leu169, Asp170, and Asp176. Tyr227 carries the phosphotyrosine modification. Positions 228, 229, 230, 233, 234, and 236 each coordinate Ca(2+). Position 262 is a phosphoserine (Ser262). A C2 2 domain is found at 270 to 403 (KLGDICFSLR…NPRRPIAQWH (134 aa)). Ca(2+) contacts are provided by Asp301 and Asp307. Phosphoserine occurs at positions 340 and 342. Asp361, Asp363, and Asp369 together coordinate Ca(2+).

It belongs to the synaptotagmin family. In terms of assembly, homotetramer. Heterodimer; heterodimerizes with SYT2 in presence of calcium. Interacts with SCAMP5. Interacts with STON2. Forms a complex with SV2B, syntaxin 1 and SNAP25. Interacts with SV2A, SV2B and SV2C. Interacts with RIMS1. Interacts with PRRT2. Interacts with DNAJC5 in a phosphorylation-dependent manner. Interacts (via N-terminus) with RAB3A. Interacts with SYT12. Interacts with calmodulin. Interacts with DNM1 (via C-terminal proline-rich domain (PRD)); this interaction facilitates vesicle fission during clathrin-mediated endocytosis (CME). Ca(2+) is required as a cofactor. In terms of processing, glycosylated.

The protein resides in the cytoplasmic vesicle. Its subcellular location is the secretory vesicle membrane. The protein localises to the secretory vesicle. It is found in the synaptic vesicle membrane. It localises to the chromaffin granule membrane. The protein resides in the cytoplasm. Calcium sensor that participates in triggering neurotransmitter release at the synapse. May have a regulatory role in the membrane interactions during trafficking of synaptic vesicles at the active zone of the synapse. It binds acidic phospholipids with a specificity that requires the presence of both an acidic head group and a diacyl backbone. A Ca(2+)-dependent interaction between synaptotagmin and putative receptors for activated protein kinase C has also been reported. It can bind to at least three additional proteins in a Ca(2+)-independent manner; these are neurexins, syntaxin and AP2. Plays a role in dendrite formation by melanocytes. In Macaca fascicularis (Crab-eating macaque), this protein is Synaptotagmin-1.